A 200-amino-acid chain; its full sequence is Recombination protein RecR (200 aa).

Residues 57–72 form a C4-type zinc finger; sequence CRQCRTLTEQELCPQC. Positions 80-175 constitute a Toprim domain; sequence TQLCVVEGPM…VASRIAHGVP (96 aa).

The protein belongs to the RecR family.

May play a role in DNA repair. It seems to be involved in an RecBC-independent recombinational process of DNA repair. It may act with RecF and RecO. The protein is Recombination protein RecR of Pseudomonas putida (strain W619).